A 371-amino-acid chain; its full sequence is 4-hydroxybenzoate polyprenyltransferase, mitochondrial (371 aa).

The N-terminal 34 residues, 1 to 34, are a transit peptide targeting the mitochondrion; sequence MLGSRAAGFARGLRAVALAWLPGWRGRSFALARA. At 35-83 the chain is on the mitochondrial matrix side; it reads AGAPHGGDLQPPACPEPRGRQLSLSAAAVVDSAPRPLQPYLRLMRLDKP. Residues 84 to 104 form a helical membrane-spanning segment; the sequence is IGTWLLYLPCTWSIGLAAEPG. The Mitochondrial intermembrane portion of the chain corresponds to 105–108; it reads CFPD. The helical transmembrane segment at 109-129 threads the bilayer; it reads WYMLSLFGTGAILMRGAGCTI. Over 130 to 148 the chain is Mitochondrial matrix; that stretch reads NDMWDQDYDKKVTRTANRP. A helical membrane pass occupies residues 149-169; sequence IAAGDISTFQSFVFLGGQLTL. Residues 170-172 lie on the Mitochondrial intermembrane side of the membrane; the sequence is ALG. A helical transmembrane segment spans residues 173 to 193; that stretch reads VLLCLNYYSIALGAGSLLLVI. The Mitochondrial matrix segment spans residues 194–203; the sequence is TYPLMKRISY. Residues 204-224 traverse the membrane as a helical segment; sequence WPQLALGLTFNWGALLGWSAI. Topologically, residues 225–231 are mitochondrial intermembrane; sequence KGSCDPS. The helical transmembrane segment at 232–252 threads the bilayer; it reads VCLPLYFSGVMWTLIYDTIYA. Topologically, residues 253–277 are mitochondrial matrix; sequence HQDKRDDVLIGLKSTALRFGENTKP. The chain crosses the membrane as a helical span at residues 278 to 298; the sequence is WLSGFSVAMLGALSLVGVNSG. At 299–300 the chain is on the mitochondrial intermembrane side; the sequence is QT. Residues 301 to 321 form a helical membrane-spanning segment; that stretch reads APYYAALGAVGAHLTHQIYTL. Residues 322-332 lie on the Mitochondrial matrix side of the membrane; that stretch reads DIHRPEDCWNK. Residues 333–353 form a helical membrane-spanning segment; the sequence is FISNRTLGLIVFLGIVLGNLW. At 354–371 the chain is on the mitochondrial intermembrane side; it reads KEKKTDKTKKGIENKIEN.

This sequence belongs to the UbiA prenyltransferase family. Requires Mg(2+) as cofactor. Widely expressed. Present in all of the tissues tested. Expressed at higher level in skeletal muscle, adrenal glands and the heart.

The protein localises to the mitochondrion inner membrane. It carries out the reaction an all-trans-polyprenyl diphosphate + 4-hydroxybenzoate = a 4-hydroxy-3-(all-trans-polyprenyl)benzoate + diphosphate. The catalysed reaction is all-trans-decaprenyl diphosphate + 4-hydroxybenzoate = 4-hydroxy-3-(all-trans-decaprenyl)benzoate + diphosphate. It catalyses the reaction all-trans-nonaprenyl diphosphate + 4-hydroxybenzoate = 4-hydroxy-3-(all-trans-nonaprenyl)benzoate + diphosphate. It participates in cofactor biosynthesis; ubiquinone biosynthesis. Mediates the second step in the final reaction sequence of coenzyme Q (CoQ) biosynthesis. Catalyzes the prenylation of para-hydroxybenzoate (PHB) with an all-trans polyprenyl donor (such as all-trans-decaprenyl diphosphate). The length of the polyprenyl side chain varies depending on the species, in humans, the side chain is comprised of 10 isoprenyls (decaprenyl) producing CoQ10 (also known as ubiquinone), whereas rodents predominantly generate CoQ9. However, this specificity is not complete, human tissues have low amounts of CoQ9 and rodent organs contain some CoQ10. Plays a central role in the biosynthesis of CoQ10. CoQ10 is a vital molecule that transports electrons from mitochondrial respiratory chain complexes. CoQs also function as cofactors for uncoupling protein and play a role as regulators of the extracellularly-induced ceramide-dependent apoptotic pathway. Regulates mitochondrial permeability transition pore (mPTP) opening and ROS production (pivotal events in cell death) in a tissue specific manner. The sequence is that of 4-hydroxybenzoate polyprenyltransferase, mitochondrial from Homo sapiens (Human).